The chain runs to 98 residues: Integration host factor subunit alpha (98 aa).

A disordered region spans residues 52 to 73; that stretch reads FDLRQKSERPGRNPKTGEDIPI. The segment covering 54-73 has biased composition (basic and acidic residues); the sequence is LRQKSERPGRNPKTGEDIPI.

Belongs to the bacterial histone-like protein family. As to quaternary structure, heterodimer of an alpha and a beta chain.

In terms of biological role, this protein is one of the two subunits of integration host factor, a specific DNA-binding protein that functions in genetic recombination as well as in transcriptional and translational control. The chain is Integration host factor subunit alpha from Pseudoalteromonas atlantica (strain T6c / ATCC BAA-1087).